The following is a 495-amino-acid chain: Alkaline protease 2 (495 aa).

An N-terminal signal peptide occupies residues 1 to 16 (MKGYLSLSILPLLVAA). The propeptide occupies 17-136 (SPVVVDSIHN…IEKDSEVHTM (120 aa)). The region spanning 43-136 (SYIVVFKKHV…IEKDSEVHTM (94 aa)) is the Inhibitor I9 domain. Residues 146 to 452 (PWGLARISHR…GGSSNYTDII (307 aa)) form the Peptidase S8 domain. Residues D182 and H214 each act as charge relay system in the active site. N-linked (GlcNAc...) asparagine glycosylation is present at N284. S380 acts as the Charge relay system in catalysis. Residues N447 and N460 are each glycosylated (N-linked (GlcNAc...) asparagine).

Belongs to the peptidase S8 family.

It catalyses the reaction Hydrolysis of proteins with broad specificity, and of Bz-Arg-OEt &gt; Ac-Tyr-OEt. Does not hydrolyze peptide amides.. In terms of biological role, alkaline protease that allows assimilation of proteinaceous substrates. Acts as a significant virulence factor in invasive aspergillosis. Required for regular sporulation. This Aspergillus fumigatus (strain CBS 144.89 / FGSC A1163 / CEA10) (Neosartorya fumigata) protein is Alkaline protease 2 (alp2).